Consider the following 161-residue polypeptide: Phosphopantetheine adenylyltransferase (161 aa).

A substrate-binding site is contributed by S9. ATP-binding positions include S9 to F10 and H17. Positions 41, 73, and 87 each coordinate substrate. ATP contacts are provided by residues G88–R90, E98, and F123–T129.

This sequence belongs to the bacterial CoaD family. As to quaternary structure, homohexamer. It depends on Mg(2+) as a cofactor.

It localises to the cytoplasm. It catalyses the reaction (R)-4'-phosphopantetheine + ATP + H(+) = 3'-dephospho-CoA + diphosphate. It participates in cofactor biosynthesis; coenzyme A biosynthesis; CoA from (R)-pantothenate: step 4/5. Its function is as follows. Reversibly transfers an adenylyl group from ATP to 4'-phosphopantetheine, yielding dephospho-CoA (dPCoA) and pyrophosphate. The protein is Phosphopantetheine adenylyltransferase of Chloroflexus aggregans (strain MD-66 / DSM 9485).